Reading from the N-terminus, the 481-residue chain is Aspartyl/glutamyl-tRNA(Asn/Gln) amidotransferase subunit B (481 aa).

It belongs to the GatB/GatE family. GatB subfamily. As to quaternary structure, heterotrimer of A, B and C subunits.

The enzyme catalyses L-glutamyl-tRNA(Gln) + L-glutamine + ATP + H2O = L-glutaminyl-tRNA(Gln) + L-glutamate + ADP + phosphate + H(+). It catalyses the reaction L-aspartyl-tRNA(Asn) + L-glutamine + ATP + H2O = L-asparaginyl-tRNA(Asn) + L-glutamate + ADP + phosphate + 2 H(+). In terms of biological role, allows the formation of correctly charged Asn-tRNA(Asn) or Gln-tRNA(Gln) through the transamidation of misacylated Asp-tRNA(Asn) or Glu-tRNA(Gln) in organisms which lack either or both of asparaginyl-tRNA or glutaminyl-tRNA synthetases. The reaction takes place in the presence of glutamine and ATP through an activated phospho-Asp-tRNA(Asn) or phospho-Glu-tRNA(Gln). This chain is Aspartyl/glutamyl-tRNA(Asn/Gln) amidotransferase subunit B, found in Pseudomonas fluorescens (strain Pf0-1).